We begin with the raw amino-acid sequence, 263 residues long: Oxidoreductase UcpA (263 aa).

10–32 provides a ligand contact to NAD(+); that stretch reads LITGALQGIGEGIARTFARHGAN. S141 serves as a coordination point for substrate. The active-site Proton acceptor is Y155.

Belongs to the short-chain dehydrogenases/reductases (SDR) family.

The polypeptide is Oxidoreductase UcpA (ucpA) (Escherichia coli (strain K12)).